Reading from the N-terminus, the 137-residue chain is Large ribosomal subunit protein uL16 (137 aa).

The protein belongs to the universal ribosomal protein uL16 family. In terms of assembly, part of the 50S ribosomal subunit.

Its function is as follows. Binds 23S rRNA and is also seen to make contacts with the A and possibly P site tRNAs. In Nitratidesulfovibrio vulgaris (strain ATCC 29579 / DSM 644 / CCUG 34227 / NCIMB 8303 / VKM B-1760 / Hildenborough) (Desulfovibrio vulgaris), this protein is Large ribosomal subunit protein uL16.